The primary structure comprises 228 residues: Mediator of RNA polymerase II transcription subunit 7-A (228 aa).

The protein belongs to the Mediator complex subunit 7 family. Component of the Mediator complex.

It is found in the nucleus. In terms of biological role, component of the Mediator complex, a coactivator involved in the regulated transcription of nearly all RNA polymerase II-dependent genes. Mediator functions as a bridge to convey information from gene-specific regulatory proteins to the basal RNA polymerase II transcription machinery. Mediator is recruited to promoters by direct interactions with regulatory proteins and serves as a scaffold for the assembly of a functional preinitiation complex with RNA polymerase II and the general transcription factors. This Xenopus laevis (African clawed frog) protein is Mediator of RNA polymerase II transcription subunit 7-A (med7-a).